Reading from the N-terminus, the 264-residue chain is MIVVKIGGRVVKNSLDKVILDIANINDKVILVHGGGDIVTDYTKRLGIEPVFVTSPEGIRSRYTTKEELEVYIMAMSLINKTITSKLCSLGKNAIGITGVDGGLLLAERKKRIIVIDERGKKRIIEGGYTGKVKEVRSEVINHLMKLFDIIVVSPLALDVEESTPLNIDGDQAAFAISKAVKVNVLVILSDVEGVLVEGKVVDRLTPEEAKELSKKIGPGMNRKLLMAAESVENGVNKVIIGSGVKDRPVSSALELNGTVIVNG.

Substrate-binding positions include 35-36, arginine 62, and asparagine 167; that span reads GG.

Belongs to the acetylglutamate kinase family. LysZ subfamily.

Its subcellular location is the cytoplasm. The enzyme catalyses [amino-group carrier protein]-C-terminal-N-(1,4-dicarboxybutan-1-yl)-L-glutamine + ATP = [amino-group carrier protein]-C-terminal-N-(1-carboxy-5-phosphooxy-5-oxopentan-1-yl)-L-glutamine + ADP. It catalyses the reaction [amino-group carrier protein]-C-terminal-gamma-(L-glutamyl)-L-glutamate + ATP = [amino-group carrier protein]-C-terminal-gamma-(5-phospho-L-glutamyl)-L-glutamate + ADP. It functions in the pathway amino-acid biosynthesis; L-lysine biosynthesis via AAA pathway; L-lysine from L-alpha-aminoadipate (Thermus route): step 2/5. The protein operates within amino-acid biosynthesis; L-arginine biosynthesis. Its function is as follows. Involved in both the arginine and lysine biosynthetic pathways. Phosphorylates the LysW-bound precursors glutamate (for arginine biosynthesis), respectively alpha-aminoadipate (for lysine biosynthesis). The sequence is that of [LysW]-aminoadipate/[LysW]-glutamate kinase from Saccharolobus islandicus (strain L.S.2.15 / Lassen #1) (Sulfolobus islandicus).